A 345-amino-acid chain; its full sequence is G-protein coupled receptor family C group 5 member D (345 aa).

Over 1–27 (MYKDCIESTGDYFLLCDAEGPWGIILE) the chain is Extracellular. A helical membrane pass occupies residues 28–48 (SLAILGIVVTILLLLAFLFLM). Topologically, residues 49–63 (RKIQDCSQWNVLPTQ) are cytoplasmic. A helical membrane pass occupies residues 64 to 84 (LLFLLSVLGLFGLAFAFIIEL). Residues 85–93 (NQQTAPVRY) lie on the Extracellular side of the membrane. Residues 94-114 (FLFGVLFALCFSCLLAHASNL) form a helical membrane-spanning segment. Topologically, residues 115–123 (VKLVRGCVS) are cytoplasmic. The chain crosses the membrane as a helical span at residues 124-144 (FSWTTILCIAIGCSLLQIIIA). The Extracellular segment spans residues 145-167 (TEYVTLIMTRGMMFVNMTPCQLN). The chain crosses the membrane as a helical span at residues 168-188 (VDFVVLLVYVLFLMALTFFVS). Topologically, residues 189–204 (KATFCGPCENWKQHGR) are cytoplasmic. The chain crosses the membrane as a helical span at residues 205-225 (LIFITVLFSIIIWVVWISMLL). The Extracellular segment spans residues 226 to 239 (RGNPQFQRQPQWDD). The helical transmembrane segment at 240–260 (PVVCIALVTNAWVFLLLYIVP) threads the bilayer. The Cytoplasmic portion of the chain corresponds to 261 to 345 (ELCILYRSCR…LSPQQDAGGV (85 aa)).

Belongs to the G-protein coupled receptor 3 family. As to quaternary structure, homodimer. In terms of tissue distribution, widely expressed in the peripheral system. Expression pattern is high in pancreas, medium in kidney, small intestine, spleen and testis, low in lung, colon, leukocyte, prostate and thymus and not detectable in brain, heart, liver, placenta, skeletal muscle and ovary.

It is found in the cell membrane. In terms of biological role, G-protein coupled receptor involved in hard keratin expression and likely plays a role in the development of hair and nails. This is G-protein coupled receptor family C group 5 member D (GPRC5D) from Homo sapiens (Human).